The following is a 264-amino-acid chain: NAD kinase 1 (264 aa).

The active-site Proton acceptor is Asp45. Residues 45–46, 122–123, Arg148, Asp150, 161–166, and Ala185 each bind NAD(+); these read DG, NE, and TAYNKS.

It belongs to the NAD kinase family. The cofactor is a divalent metal cation.

The protein localises to the cytoplasm. It carries out the reaction NAD(+) + ATP = ADP + NADP(+) + H(+). Its function is as follows. Involved in the regulation of the intracellular balance of NAD and NADP, and is a key enzyme in the biosynthesis of NADP. Catalyzes specifically the phosphorylation on 2'-hydroxyl of the adenosine moiety of NAD to yield NADP. This chain is NAD kinase 1, found in Listeria innocua serovar 6a (strain ATCC BAA-680 / CLIP 11262).